The following is a 372-amino-acid chain: Alanine dehydrogenase 1 (372 aa).

Histidine 94 is an active-site residue. 170–200 (TYVIFGGGVAATNAANVALGLNAKVIIIELN) lines the NAD(+) pocket.

This sequence belongs to the AlaDH/PNT family.

It catalyses the reaction L-alanine + NAD(+) + H2O = pyruvate + NH4(+) + NADH + H(+). Its pathway is amino-acid degradation; L-alanine degradation via dehydrogenase pathway; NH(3) and pyruvate from L-alanine: step 1/1. Functionally, may play a role in cell wall synthesis as L-alanine is an important constituent of the peptidoglycan layer. The chain is Alanine dehydrogenase 1 (ald1) from Staphylococcus aureus (strain bovine RF122 / ET3-1).